A 254-amino-acid polypeptide reads, in one-letter code: uncharacterized protein (254 aa).

Helical transmembrane passes span 33–53 (MLWV…LFFI), 70–90 (FNKL…LFKS), 92–112 (FALS…LNFM), 133–153 (FIIF…ILLI), and 223–243 (FLVF…PLIF).

This sequence to M.jannaschii MJ0902.

The protein resides in the cell membrane. This is an uncharacterized protein from Methanocaldococcus jannaschii (strain ATCC 43067 / DSM 2661 / JAL-1 / JCM 10045 / NBRC 100440) (Methanococcus jannaschii).